A 478-amino-acid chain; its full sequence is Zinc finger protein 410 (478 aa).

Disordered regions lie at residues 84-113 (PDGE…LQDL) and 187-214 (NAKT…PLPQ). Positions 103–113 (TPESPSLLQDL) are enriched in polar residues. 5 C2H2-type zinc fingers span residues 219–243 (LKCT…LKTH), 249–273 (FICP…MRTH), 279–303 (FMCH…RRIH), 309–333 (FLCE…LVVH), and 339–362 (HQCQ…RKHH). Residues cysteine 221, cysteine 226, histidine 239, histidine 243, cysteine 251, cysteine 256, histidine 269, histidine 273, cysteine 281, cysteine 286, histidine 299, histidine 303, cysteine 311, cysteine 316, histidine 329, histidine 333, cysteine 341, cysteine 344, histidine 357, and histidine 361 each contribute to the Zn(2+) site.

As to quaternary structure, interacts with CDKN2A/p14ARF. In terms of processing, O-glycosylated. O-GlcNAcylation may occur in response to increasing glucose levels and affect transcription factor activity. Sumoylated. Sumoylation increases its half-life, possibly by blocking ubiquitin-mediated degradation.

Its subcellular location is the nucleus. The protein resides in the chromosome. Its function is as follows. Transcription factor that binds to the sequence motif 5'-CATCCCATAATA-3', and is specifically required to silence expression of fetal hemoglobin in adult erythroid cells. Prevents expression of fetal hemoglobin genes HBG1 and HBG2 through CHD4: acts as a direct transcriptional activator of CHD4, a central component of the NuRD complex that represses transcription of fetal hemoglobin genes HBG1 and HBG2 in erythroid cells. May also activate transcription of matrix-remodeling genes such as MMP1 during fibroblast senescence. May activate transcription of the gap junction gene GJC1, perhaps in response to increasing glucose. However, recent studies suggest that ZNF410 is dedicated to regulate expression of a single gene: CHD4. The sequence is that of Zinc finger protein 410 from Mus musculus (Mouse).